We begin with the raw amino-acid sequence, 135 residues long: Histone H1, macronuclear (135 aa).

The segment covering 1-17 (MPAKTATAVKRTTTTKK) has biased composition (low complexity). The interval 1–135 (MPAKTATAVK…GGKKKSAKKN (135 aa)) is disordered. Basic residues-rich tracts occupy residues 18 to 54 (SAAKRKTSKAVKKAGKRTQSKAKGAQKVKKAATRRTP) and 62 to 79 (KATKKAGARKASTKRSAT). Positions 80 to 112 (KKTTAAPAAAAAPATDAPAAAATPSKATGSAKK) are enriched in low complexity. Over residues 113–135 (ASARKSSAKKPAKGGKKKSAKKN) the composition is skewed to basic residues.

The protein resides in the nucleus. It is found in the chromosome. Functionally, histones H1 are necessary for the condensation of nucleosome chains into higher-order structures. In Euplotes eurystomus (Ciliate), this protein is Histone H1, macronuclear.